The following is a 729-amino-acid chain: Cytoplasmic polyadenylation element-binding protein 4 (729 aa).

Disordered regions lie at residues 20-50 (FPVRFHPHLQPPHHHQNATPNPAAFINNNTA) and 78-133 (EKAK…KEKL). The span at 24-35 (FHPHLQPPHHHQ) shows a compositional bias: basic residues. Positions 83-96 (QQQEQQDPLEKQQL) are enriched in low complexity. Phosphoserine is present on residues S97, S99, and S137. A disordered region spans residues 218-324 (FGGSFSPQIG…RDHRRGLNGG (107 aa)). Residues 232–249 (HHPHHPHFQHHHSQHQQQ) show a composition bias toward basic residues. Phosphoserine is present on residues S252 and S255. Low complexity predominate over residues 285–300 (WSSYQSPSPTPSSSWS). A compositionally biased stretch (gly residues) spans 301–311 (PGGGGYGGWGA). T326 carries the post-translational modification Phosphothreonine. A phosphoserine mark is found at S330 and S332. RRM domains are found at residues 472 to 563 (RKVF…PWNL) and 580 to 662 (KTIF…PYVL). The interval 541–543 (KLY) is RNA-binding. The Zn(2+) site is built by C667, C675, C684, C689, C694, C697, H702, and H710.

The protein belongs to the RRM CPEB family. As to quaternary structure, interacts with TOB1. Highly expressed in brain, including hippocampus, amygdala, granule and Purkinje cells of the cerebellum (at protein level). Expressed in spinal cord (at protein level). Expressed in kidney, lung and heart (at protein level). Expressed in liver (at protein level). Expressed in spleen and testis (at protein level). Weakly expressed in ovary and in granular cells of dentate gyrus and the pyramidal cells of CA3 and CA1 of the hippocampus.

The protein localises to the cytoplasm. The protein resides in the cell projection. Its subcellular location is the dendrite. It localises to the dendritic spine. It is found in the postsynaptic density. The protein localises to the axon. The protein resides in the growth cone. Its subcellular location is the endoplasmic reticulum. It localises to the perinuclear region. Its function is as follows. Sequence-specific RNA-binding protein that binds to the cytoplasmic polyadenylation element (CPE), an uridine-rich sequence element (consensus sequence 5'-UUUUUAU-3') within the mRNA 3'-UTR. RNA binding results in a clear conformational change analogous to the Venus fly trap mechanism. Regulates activation of unfolded protein response (UPR) in the process of adaptation to ER stress in liver, by maintaining translation of CPE-regulated mRNAs in conditions in which global protein synthesis is inhibited. Required for cell cycle progression, specifically for cytokinesis and chromosomal segregation. Plays a role as an oncogene promoting tumor growth and progression by positively regulating translation of t-plasminogen activator/PLAT. Stimulates proliferation of melanocytes. In contrast to CPEB1 and CPEB3, does not play role in synaptic plasticity, learning and memory. In Mus musculus (Mouse), this protein is Cytoplasmic polyadenylation element-binding protein 4 (Cpeb4).